Here is an 81-residue protein sequence, read N- to C-terminus: Large ribosomal subunit protein bL31B (81 aa).

Belongs to the bacterial ribosomal protein bL31 family. Type B subfamily. In terms of assembly, part of the 50S ribosomal subunit.

In Exiguobacterium sibiricum (strain DSM 17290 / CCUG 55495 / CIP 109462 / JCM 13490 / 255-15), this protein is Large ribosomal subunit protein bL31B.